Consider the following 453-residue polypeptide: Aldehyde dehydrogenase, dimeric NADP-preferring (453 aa).

Ser2 carries the N-acetylserine modification. Residue Lys178 is modified to N6-acetyllysine. NAD(+) is bound at residue 188 to 193 (GSTAVG). Lys194 carries the post-translational modification N6-acetyllysine. Active-site residues include Glu210 and Cys244.

It belongs to the aldehyde dehydrogenase family. As to quaternary structure, homodimer. In terms of tissue distribution, constitutively expressed in cornea, stomach, skin, bladder and lungs. Lowest expression levels in lungs and bladder.

The protein localises to the cytoplasm. The catalysed reaction is an aldehyde + NAD(+) + H2O = a carboxylate + NADH + 2 H(+). It carries out the reaction octanal + NAD(+) + H2O = octanoate + NADH + 2 H(+). ALDHs play a major role in the detoxification of alcohol-derived acetaldehyde. They are involved in the metabolism of corticosteroids, biogenic amines, neurotransmitters, and lipid peroxidation. Oxidizes medium and long chain aldehydes into non-toxic fatty acids. Preferentially oxidizes aromatic aldehyde substrates. Comprises about 50 percent of corneal epithelial soluble proteins. May play a role in preventing corneal damage caused by ultraviolet light. In Mus musculus (Mouse), this protein is Aldehyde dehydrogenase, dimeric NADP-preferring (Aldh3a1).